A 453-amino-acid chain; its full sequence is Bifunctional protein GlmU (453 aa).

Positions 1–226 (MKFSTVILAA…SIEVEGVNDR (226 aa)) are pyrophosphorylase. UDP-N-acetyl-alpha-D-glucosamine contacts are provided by residues 8 to 11 (LAAG), K22, Q73, 78 to 79 (GT), 100 to 102 (YGD), G137, E151, N166, and N224. D102 is a binding site for Mg(2+). Residue N224 participates in Mg(2+) binding. Residues 227-247 (IQLARLERAFQARQAKKLLEQ) are linker. Residues 248-453 (GVMLRDPARF…AGWQRPAKKK (206 aa)) are N-acetyltransferase. UDP-N-acetyl-alpha-D-glucosamine is bound by residues R330 and K348. H360 acts as the Proton acceptor in catalysis. The UDP-N-acetyl-alpha-D-glucosamine site is built by Y363 and N374. Acetyl-CoA is bound by residues A377, 383-384 (NY), S402, A420, and R437.

It in the N-terminal section; belongs to the N-acetylglucosamine-1-phosphate uridyltransferase family. The protein in the C-terminal section; belongs to the transferase hexapeptide repeat family. As to quaternary structure, homotrimer. Requires Mg(2+) as cofactor.

The protein resides in the cytoplasm. The enzyme catalyses alpha-D-glucosamine 1-phosphate + acetyl-CoA = N-acetyl-alpha-D-glucosamine 1-phosphate + CoA + H(+). The catalysed reaction is N-acetyl-alpha-D-glucosamine 1-phosphate + UTP + H(+) = UDP-N-acetyl-alpha-D-glucosamine + diphosphate. It functions in the pathway nucleotide-sugar biosynthesis; UDP-N-acetyl-alpha-D-glucosamine biosynthesis; N-acetyl-alpha-D-glucosamine 1-phosphate from alpha-D-glucosamine 6-phosphate (route II): step 2/2. Its pathway is nucleotide-sugar biosynthesis; UDP-N-acetyl-alpha-D-glucosamine biosynthesis; UDP-N-acetyl-alpha-D-glucosamine from N-acetyl-alpha-D-glucosamine 1-phosphate: step 1/1. The protein operates within bacterial outer membrane biogenesis; LPS lipid A biosynthesis. Functionally, catalyzes the last two sequential reactions in the de novo biosynthetic pathway for UDP-N-acetylglucosamine (UDP-GlcNAc). The C-terminal domain catalyzes the transfer of acetyl group from acetyl coenzyme A to glucosamine-1-phosphate (GlcN-1-P) to produce N-acetylglucosamine-1-phosphate (GlcNAc-1-P), which is converted into UDP-GlcNAc by the transfer of uridine 5-monophosphate (from uridine 5-triphosphate), a reaction catalyzed by the N-terminal domain. In Vibrio cholerae serotype O1 (strain M66-2), this protein is Bifunctional protein GlmU.